The primary structure comprises 156 residues: SsrA-binding protein (156 aa).

The disordered stretch occupies residues 131–156 (YDKRQTLREQQDKREALRVMRERNRG).

It belongs to the SmpB family.

The protein localises to the cytoplasm. Required for rescue of stalled ribosomes mediated by trans-translation. Binds to transfer-messenger RNA (tmRNA), required for stable association of tmRNA with ribosomes. tmRNA and SmpB together mimic tRNA shape, replacing the anticodon stem-loop with SmpB. tmRNA is encoded by the ssrA gene; the 2 termini fold to resemble tRNA(Ala) and it encodes a 'tag peptide', a short internal open reading frame. During trans-translation Ala-aminoacylated tmRNA acts like a tRNA, entering the A-site of stalled ribosomes, displacing the stalled mRNA. The ribosome then switches to translate the ORF on the tmRNA; the nascent peptide is terminated with the 'tag peptide' encoded by the tmRNA and targeted for degradation. The ribosome is freed to recommence translation, which seems to be the essential function of trans-translation. The chain is SsrA-binding protein from Arthrobacter sp. (strain FB24).